The sequence spans 729 residues: Heterogeneous nuclear ribonucleoprotein M (729 aa).

Over residues 1–13 the composition is skewed to low complexity; it reads MAAGVEAAAEVAA. The disordered stretch occupies residues 1–65; it reads MAAGVEAAAE…GGNRFEPYSN (65 aa). A2 is subject to N-acetylalanine. A Glycyl lysine isopeptide (Lys-Gly) (interchain with G-Cter in SUMO2) cross-link involves residue K17. S29 bears the Phosphoserine mark. Glycyl lysine isopeptide (Lys-Gly) (interchain with G-Cter in SUMO2) cross-links involve residues K37, K68, and K82. The span at 37–49 shows a compositional bias: basic and acidic residues; it reads KGEERPTQNEKRK. RRM domains follow at residues 70-148 and 203-280; these read YRAF…EDPD and STVF…MDER. Phosphoserine is present on S85. Glycyl lysine isopeptide (Lys-Gly) (interchain with G-Cter in SUMO2) cross-links involve residues K87 and K126. K133 is modified (N6-acetyllysine; alternate). Residue K133 forms a Glycyl lysine isopeptide (Lys-Gly) (interchain with G-Cter in SUMO2); alternate linkage. Residues K142 and K144 each participate in a glycyl lysine isopeptide (Lys-Gly) (interchain with G-Cter in SUMO2) cross-link. Position 203 is a phosphoserine (S203). K220 participates in a covalent cross-link: Glycyl lysine isopeptide (Lys-Gly) (interchain with G-Cter in SUMO2). An N6-acetyllysine; alternate modification is found at K276. A Glycyl lysine isopeptide (Lys-Gly) (interchain with G-Cter in SUMO2); alternate cross-link involves residue K276. Glycyl lysine isopeptide (Lys-Gly) (interchain with G-Cter in SUMO2) cross-links involve residues K284 and K344. S364 and S376 each carry phosphoserine. Glycyl lysine isopeptide (Lys-Gly) (interchain with G-Cter in SUMO2) cross-links involve residues K380 and K387. The residue at position 396 (S396) is a Phosphoserine. 4 repeat units span residues 399–404, 406–411, 414–419, and 425–430. The tract at residues 399-607 is 27 X 6 AA repeats of [GEVSTPAN]-[ILMV]-[DE]-[RH]-[MLVI]-[GAV]; it reads GIERMGPGID…ALGAGIERMG (209 aa). S431 bears the Phosphoserine mark. 3 repeat units span residues 432 to 437, 439 to 444, and 445 to 450. At S451 the chain carries Phosphoserine. 4 tandem repeats follow at residues 452 to 457, 460 to 465, 467 to 472, and 474 to 479. A Phosphoserine modification is found at S467. A Phosphoserine modification is found at S480. 16 tandem repeats follow at residues 481–486, 492–497, 499–504, 506–511, 513–518, 520–525, 527–532, 539–544, 546–551, 553–558, 561–566, 567–571, 574–579, 580–584, 587–592, and 602–607. Residue R495 is modified to Omega-N-methylarginine. Residue S527 is modified to Phosphoserine. The residue at position 574 (S574) is a Phosphoserine. S587 carries the post-translational modification Phosphoserine. 3 positions are modified to phosphoserine: S617, S632, and S636. K650 participates in a covalent cross-link: Glycyl lysine isopeptide (Lys-Gly) (interchain with G-Cter in SUMO2). The region spanning 652–728 is the RRM 3 domain; sequence CQIFVRNLPF…REIDVRIDRN (77 aa). T664 bears the Phosphothreonine mark. K666 participates in a covalent cross-link: Glycyl lysine isopeptide (Lys-Gly) (interchain with G-Cter in SUMO2). N6-acetyllysine is present on K671. Residues K684 and K691 each participate in a glycyl lysine isopeptide (Lys-Gly) (interchain with G-Cter in SUMO2) cross-link. K697 is modified (N6-acetyllysine; alternate). A Glycyl lysine isopeptide (Lys-Gly) (interchain with G-Cter in SUMO2); alternate cross-link involves residue K697. K697 participates in a covalent cross-link: Glycyl lysine isopeptide (Lys-Gly) (interchain with G-Cter in SUMO1); alternate. S700 bears the Phosphoserine mark. Residue K715 forms a Glycyl lysine isopeptide (Lys-Gly) (interchain with G-Cter in SUMO2) linkage.

Identified in the spliceosome C complex. Interacts with PPIA/CYPA. Sumoylated.

It is found in the nucleus. Its function is as follows. Pre-mRNA binding protein in vivo, binds avidly to poly(G) and poly(U) RNA homopolymers in vitro. Involved in splicing. Acts as a receptor for carcinoembryonic antigen in Kupffer cells, may initiate a series of signaling events leading to tyrosine phosphorylation of proteins and induction of IL-1 alpha, IL-6, IL-10 and tumor necrosis factor alpha cytokines. The polypeptide is Heterogeneous nuclear ribonucleoprotein M (Hnrnpm) (Mus musculus (Mouse)).